The sequence spans 705 residues: Complement C1r subcomponent (705 aa).

The signal sequence occupies residues 1 to 17 (MWLLYLLVPALFCRAGG). The region spanning 18-141 (SIPIPQKLFG…KGFLAYYQAV (124 aa)) is the CUB 1 domain. Positions 66, 74, and 119 each coordinate Ca(2+). C71 and C89 are disulfide-bonded. N125 is a glycosylation site (N-linked (GlcNAc...) asparagine). 3 residues coordinate Ca(2+): D142, L143, and E145. In terms of domain architecture, EGF-like; calcium-binding spans 142-190 (DLDECASRSKSGEEDPQPQCQHLCHNYVGGYFCSCRPGYELQEDTHSCQ). 4 disulfide bridges follow: C146-C165, C161-C174, C176-C189, and C193-C220. Residues N167, Y168, and G171 each coordinate Ca(2+). N167 bears the (3R)-3-hydroxyasparagine mark. One can recognise a CUB 2 domain in the interval 193–305 (CSSELYTEAS…RGWKLRYTTE (113 aa)). Residue S206 is modified to Phosphoserine; by CK2. N-linked (GlcNAc...) asparagine glycosylation occurs at N221. Ca(2+) contacts are provided by D243, D253, D290, and D294. A disulfide bridge connects residues C250 and C268. 2 consecutive Sushi domains span residues 307 to 373 (IKCP…RCKI) and 374 to 449 (KDCG…RCLP). Disulfide bonds link C309–C358, C338–C371, C376–C429, C406–C447, and C451–C577. In terms of domain architecture, Peptidase S1 spans 464-702 (IIGGQKAKMG…YVDWIKKEME (239 aa)). H502 (charge relay system) is an active-site residue. N-linked (GlcNAc...) asparagine glycosylation occurs at N514. The Charge relay system role is filled by D557. The N-linked (GlcNAc...) asparagine glycan is linked to N581. 2 disulfide bridges follow: C620–C639 and C650–C680. S654 acts as the Charge relay system in catalysis.

The protein belongs to the peptidase S1 family. As to quaternary structure, core component of the complement C1 complex, a calcium-dependent complex composed of 1 molecule of the C1Q subcomplex, 2 molecules of C1R and 2 molecules of C1S. The C1Q subcomplex is composed 18 subunits: 3 chains of C1QA, C1QB, and C1QC trimerize to form 6 collagen-like triple helices connected to six globular ligand-recognition modules. Within the C1 complex, C1R is a dimer of identical chains, each of which is activated by cleavage into two chains, heavy and light, connected by disulfide bonds. Post-translationally, cleaved and activated by autocatalytic processing to generate Complement C1r subcomponent heavy and light chains that are connected by disulfide bonds. The iron and 2-oxoglutarate dependent 3-hydroxylation of aspartate and asparagine is (R) stereospecific within EGF domains.

Its subcellular location is the secreted. The protein resides in the cell surface. The enzyme catalyses Selective cleavage of Lys(or Arg)-|-Ile bond in complement subcomponent C1s to form the active form of C1s (EC 3.4.21.42).. Activated by the C1Q subcomplex of the C1 complex following C1Q binding to immunoglobulins (IgG or IgM) complexed with antigens to form antigen-antibody complexes on the surface of pathogens. Immunoglobulin-binding promotes autoactivation of C1R, which results in the cleavage of the Arg-Ile bond in the catalytic domain. In terms of biological role, serine protease component of the complement C1 complex, a multiprotein complex that initiates the classical pathway of the complement system, a cascade of proteins that leads to phagocytosis and breakdown of pathogens and signaling that strengthens the adaptive immune system. C1R catalyzes the first enzymatic step in the classical complement pathway: it is activated by the C1Q subcomplex of the C1 complex, which associates with IgG or IgM immunoglobulins complexed with antigens to form antigen-antibody complexes on the surface of pathogens. Immunoglobulin-binding promotes the autocatalytic cleavage and activation of C1R. Activated C1R then cleaves and activates C1S, the second protease of the classical complement pathway. It is unclear if C1R activates C1S within single, strained C1 complexes or between neighboring C1 complexes on surfaces. The sequence is that of Complement C1r subcomponent from Homo sapiens (Human).